We begin with the raw amino-acid sequence, 628 residues long: tRNA (guanine(37)-N(1))-methyltransferase (628 aa).

Residues His265, 303–304 (DL), 342–343 (DG), and Asn445 contribute to the S-adenosyl-L-methionine site.

Belongs to the class I-like SAM-binding methyltransferase superfamily. TRM5/TYW2 family. As to quaternary structure, monomer.

The protein localises to the mitochondrion matrix. Its subcellular location is the nucleus. The protein resides in the cytoplasm. It carries out the reaction guanosine(37) in tRNA + S-adenosyl-L-methionine = N(1)-methylguanosine(37) in tRNA + S-adenosyl-L-homocysteine + H(+). Specifically methylates the N1 position of guanosine-37 in various cytoplasmic and mitochondrial tRNAs. Methylation is not dependent on the nature of the nucleoside 5' of the target nucleoside. This is the first step in the biosynthesis of wybutosine (yW), a modified base adjacent to the anticodon of tRNAs and required for accurate decoding. This is tRNA (guanine(37)-N(1))-methyltransferase from Mycosarcoma maydis (Corn smut fungus).